An 881-amino-acid polypeptide reads, in one-letter code: Cell wall protein PRY3 (881 aa).

The first 18 residues, methionine 1–alanine 18, serve as a signal peptide directing secretion. The SCP domain occupies leucine 30 to tyrosine 144. Asparagine 101 carries an N-linked (GlcNAc...) asparagine glycan. Positions valine 262 to threonine 313 are disordered. N-linked (GlcNAc...) asparagine glycosylation occurs at asparagine 360. 2 disordered regions span residues alanine 381–histidine 400 and valine 453–alanine 494. Polar residues predominate over residues glutamine 386–histidine 400. Asparagine 488, asparagine 535, asparagine 547, and asparagine 569 each carry an N-linked (GlcNAc...) asparagine glycan. A disordered region spans residues isoleucine 579–leucine 611. Residues proline 585–aspartate 594 show a composition bias toward polar residues. Positions threonine 599–leucine 611 are enriched in low complexity. The N-linked (GlcNAc...) asparagine glycan is linked to asparagine 625. 2 disordered regions span residues leucine 758–threonine 788 and proline 800–proline 830. 2 stretches are compositionally biased toward low complexity: residues serine 776–threonine 788 and arginine 808–serine 820. Residues glutamine 821–proline 830 are compositionally biased toward polar residues. A lipid anchor (GPI-anchor amidated glycine) is attached at glycine 853. The propeptide at alanine 854–phenylalanine 881 is removed in mature form.

Belongs to the CRISP family. Post-translationally, the GPI-anchor is attached to the protein in the endoplasmic reticulum and serves to target the protein to the cell surface. There, the glucosamine-inositol phospholipid moiety is cleaved off and the GPI-modified mannoprotein is covalently attached via its lipidless GPI glycan remnant to the 1,6-beta-glucan of the outer cell wall layer.

The protein resides in the secreted. Its subcellular location is the cell wall. It localises to the membrane. Its function is as follows. The full-length isoform (isoform Long) is a daughter cell-specific cell wall protein required for efficient export of lipids such as acetylated sterols. Acts in detoxification of hydrophobic compounds. Involved in tolerance to organic solvents such as dimethyl sulfoxide (DMSO). Also plays a role as an inhibitor of mating. STE12 is utilized as a repressor of full-length PRY3 transcription, ensuring efficient mating. There is no evidence that production of the short PRY3 transcript (isoform Short) is anything more than an adventitious by-product of the mechanism responsible for the repression of the full-length transcript. Moreover, no disadvantage is detectable for cells unable to make the short transcript. The sequence is that of Cell wall protein PRY3 (PRY3) from Saccharomyces cerevisiae (strain ATCC 204508 / S288c) (Baker's yeast).